A 532-amino-acid chain; its full sequence is MPLLHPQSLRHPSFEIQTQRRSNSTTRLLLSHKFLHSQASIISISRTRILKRVSQNLSVAKAASAQASSSVGESVAQTSEKDVLKALSQIIDPDFGTDIVSCGFVKDLGINEALGEVSFRLELTTPACPVKDMFENKANEVVAALPWVKKVNVTMSAQPAKPIFAGQLPFGLSRISNIIAVSSCKGGVGKSTVAVNLAYTLAGMGARVGIFDADVYGPSLPTMVNPESRILEMNPEKKTIIPTEYMGVKLVSFGFAGQGRAIMRGPMVSGVINQLLTTTEWGELDYLVIDMPPGTGDIQLTLCQVAPLTAAVIVTTPQKLAFIDVAKGVRMFSKLKVPCVAVVENMCHFDADGKRYYPFGKGSGSEVVKQFGIPHLFDLPIRPTLSASGDSGTPEVVSDPLSDVARTFQDLGVCVVQQCAKIRQQVSTAVTYDKYLKAIRVKVPNSDEEFLLHPATVRRNDRSAQSVDEWTGEQKVLYGDVAEDIEPEDIRPMGNYAVSITWPDGFSQIAPYDQLEEIERLVDVPPLSPVEV.

The N-terminal 61 residues, 1 to 61 (MPLLHPQSLR…RVSQNLSVAK (61 aa)), are a transit peptide targeting the chloroplast. A62 is modified (N-acetylalanine). 184 to 191 (CKGGVGKS) contacts ATP.

This sequence belongs to the Mrp/NBP35 ATP-binding proteins family. [4Fe-4S] cluster serves as cofactor. As to expression, expressed in aerial tissues exposed to light. Very low expression in roots.

It is found in the plastid. Its subcellular location is the chloroplast stroma. Required for photosystem I (PSI) biosynthesis and assembly. May serve as a chloroplast scaffold protein that specifically assembles iron-sulfur (4Fe-4S) clusters and transfers them to the chloroplast PSI and ferredoxin-thioredoxin (FTR) complexes. Can assemble a 4Fe-4S cluster and transfer it to apoproteins in yeast cells. Probably not required for assembly or stability of plastidic 2Fe-2S clusters. The protein is Fe-S cluster assembly factor HCF101, chloroplastic (HCF101) of Arabidopsis thaliana (Mouse-ear cress).